Reading from the N-terminus, the 407-residue chain is D-inositol 3-phosphate glycosyltransferase (407 aa).

Histidine 2 is a 1D-myo-inositol 3-phosphate binding site. UDP-N-acetyl-alpha-D-glucosamine is bound by residues 8–9 (QP) and glycine 16. Residues 13–18 (DAGGLN), arginine 71, tyrosine 104, threonine 128, and arginine 148 each bind 1D-myo-inositol 3-phosphate. Residues arginine 222 and lysine 227 each coordinate UDP-N-acetyl-alpha-D-glucosamine. 3 residues coordinate Mg(2+): tyrosine 297, arginine 298, and alanine 300. Glutamate 310 and glutamate 318 together coordinate UDP-N-acetyl-alpha-D-glucosamine. Mg(2+) is bound at residue threonine 324.

Belongs to the glycosyltransferase group 1 family. MshA subfamily. Homodimer.

The catalysed reaction is 1D-myo-inositol 3-phosphate + UDP-N-acetyl-alpha-D-glucosamine = 1D-myo-inositol 2-acetamido-2-deoxy-alpha-D-glucopyranoside 3-phosphate + UDP + H(+). Catalyzes the transfer of a N-acetyl-glucosamine moiety to 1D-myo-inositol 3-phosphate to produce 1D-myo-inositol 2-acetamido-2-deoxy-glucopyranoside 3-phosphate in the mycothiol biosynthesis pathway. This Frankia alni (strain DSM 45986 / CECT 9034 / ACN14a) protein is D-inositol 3-phosphate glycosyltransferase.